Consider the following 153-residue polypeptide: Regulatory protein RecX (153 aa).

This sequence belongs to the RecX family.

It is found in the cytoplasm. Its function is as follows. Modulates RecA activity. The sequence is that of Regulatory protein RecX from Mannheimia succiniciproducens (strain KCTC 0769BP / MBEL55E).